Consider the following 122-residue polypeptide: Acidic phospholipase A2 BpirPLA2-I (122 aa).

7 disulfides stabilise this stretch: C26-C115, C28-C44, C43-C95, C49-C122, C50-C88, C57-C81, and C75-C86. Residues Y27, G29, and G31 each coordinate Ca(2+). The active site involves H47. D48 is a binding site for Ca(2+). The active site involves D89. Residues 105 to 117 carry the Antiplatelet activity motif; it reads IKYWFYGAKNCQE.

It belongs to the phospholipase A2 family. Group II subfamily. D49 sub-subfamily. Requires Ca(2+) as cofactor. In terms of tissue distribution, expressed by the venom gland.

Its subcellular location is the secreted. It catalyses the reaction a 1,2-diacyl-sn-glycero-3-phosphocholine + H2O = a 1-acyl-sn-glycero-3-phosphocholine + a fatty acid + H(+). Inhibited by EDTA and p-bromophenacyl bromide (BPB). Snake venom phospholipase A2 (PLA2) that inhibits collagen/ADP-induced platelet aggregation, and induces hypotension in rats (activity abolished in the presence of p-bromophenacyl bromide). PLA2 catalyzes the calcium-dependent hydrolysis of the 2-acyl groups in 3-sn-phosphoglycerides. In Bothrops pirajai (Piraja's lancehead), this protein is Acidic phospholipase A2 BpirPLA2-I.